A 388-amino-acid polypeptide reads, in one-letter code: Succinate--CoA ligase [ADP-forming] subunit beta (388 aa).

The ATP-grasp domain maps to 9–244 (KQLFAEFGLP…PSQEDEREAH (236 aa)). ATP-binding positions include lysine 46, 53–55 (GRG), glutamate 99, serine 102, and glutamate 107. The Mg(2+) site is built by asparagine 199 and aspartate 213. Substrate is bound by residues asparagine 264 and 321-323 (GIV).

The protein belongs to the succinate/malate CoA ligase beta subunit family. As to quaternary structure, heterotetramer of two alpha and two beta subunits. Mg(2+) is required as a cofactor.

The catalysed reaction is succinate + ATP + CoA = succinyl-CoA + ADP + phosphate. The enzyme catalyses GTP + succinate + CoA = succinyl-CoA + GDP + phosphate. It participates in carbohydrate metabolism; tricarboxylic acid cycle; succinate from succinyl-CoA (ligase route): step 1/1. In terms of biological role, succinyl-CoA synthetase functions in the citric acid cycle (TCA), coupling the hydrolysis of succinyl-CoA to the synthesis of either ATP or GTP and thus represents the only step of substrate-level phosphorylation in the TCA. The beta subunit provides nucleotide specificity of the enzyme and binds the substrate succinate, while the binding sites for coenzyme A and phosphate are found in the alpha subunit. This is Succinate--CoA ligase [ADP-forming] subunit beta from Vibrio parahaemolyticus serotype O3:K6 (strain RIMD 2210633).